The sequence spans 84 residues: Defensin-like protein 199 (84 aa).

Positions 1–24 (MAITMRTLVAFVFTIFFIISFVHS) are cleaved as a signal peptide. 4 disulfides stabilise this stretch: cysteine 40–cysteine 80, cysteine 47–cysteine 72, cysteine 56–cysteine 78, and cysteine 60–cysteine 79.

It belongs to the DEFL family.

It localises to the secreted. This is Defensin-like protein 199 from Arabidopsis thaliana (Mouse-ear cress).